A 446-amino-acid polypeptide reads, in one-letter code: sn-2 acyl-lipid omega-3 desaturase (ferredoxin), chloroplastic (446 aa).

The transit peptide at 1 to 65 (MANLVLSECG…DGFTRNWALN (65 aa)) directs the protein to the chloroplast. The next 2 membrane-spanning stretches (helical) occupy residues 118-138 (LSYV…AAYL) and 141-161 (WIVW…LFVL). The short motif at 163–167 (HDCGH) is the Histidine box-1 element. Residues 199–203 (HRTHH) carry the Histidine box-2 motif. 3 consecutive transmembrane segments (helical) span residues 231–250 (RFFR…YLWA), 279–299 (TACW…IGPI), and 302–322 (LKLY…VTYL). Positions 366–370 (HVIHH) match the Histidine box-3 motif.

This sequence belongs to the fatty acid desaturase type 1 family. As to expression, most abundant in leaves and seedlings.

The protein resides in the plastid. It is found in the chloroplast inner membrane. It carries out the reaction a (7Z,10Z)-hexadecadienoyl-containing glycerolipid + 2 reduced [2Fe-2S]-[ferredoxin] + O2 + 2 H(+) = a (7Z,10Z,13Z)-hexadecatrienoyl-containing glycerolipid + 2 oxidized [2Fe-2S]-[ferredoxin] + 2 H2O. The catalysed reaction is a (9Z,12Z)-octadecadienoyl-containing glycerolipid + 2 reduced [2Fe-2S]-[ferredoxin] + O2 + 2 H(+) = (9Z,12Z,15Z)-octadecatrienoyl-containing glycerolipid + 2 oxidized [2Fe-2S]-[ferredoxin] + 2 H2O. Its pathway is lipid metabolism; polyunsaturated fatty acid biosynthesis. Functionally, chloroplast omega-3 fatty acid desaturase introduces the third double bond in the biosynthesis of 16:3 and 18:3 fatty acids, important constituents of plant membranes. It is thought to use ferredoxin as an electron donor and to act on fatty acids esterified to galactolipids, sulfolipids and phosphatidylglycerol. This Arabidopsis thaliana (Mouse-ear cress) protein is sn-2 acyl-lipid omega-3 desaturase (ferredoxin), chloroplastic.